Consider the following 252-residue polypeptide: GPI alpha-1,4-mannosyltransferase I, stabilizing subunit (252 aa).

The first 22 residues, methionine 1–alanine 22, serve as a signal peptide directing secretion. Residues asparagine 97 and asparagine 209 are each glycosylated (N-linked (GlcNAc...) asparagine). A helical membrane pass occupies residues valine 225–phenylalanine 245.

Belongs to the PIGX family. As to quaternary structure, part of the glycosylphosphatidylinositol-mannosyltransferase I complex that is composed of PIGM and PIGX. Interacts with PIGM; PIGX stabilizes PIGM.

It localises to the endoplasmic reticulum membrane. It participates in glycolipid biosynthesis; glycosylphosphatidylinositol-anchor biosynthesis. In terms of biological role, stabilizing subunit of the glycosylphosphatidylinositol-mannosyltransferase I complex which catalyzes the transfer of the first mannose, via an alpha-1,4 bond from a dolichol-phosphate-mannose (Dol-P-Man) to the glucosaminyl acyl phosphatidylinositol (GlcN-(acyl)PI) intermediate to generate alpha-D-Man-(1-&gt;4)-alpha-D-GlcN-(1-&gt;6)-(1-radyl,2-acyl-sn-glycero-3-phospho)-2-acyl-inositol and participates in the sixth step of the glycosylphosphatidylinositol-anchor biosynthesis. Probably acts by stabilizing the mannosyltransferase PIGM. This is GPI alpha-1,4-mannosyltransferase I, stabilizing subunit from Rattus norvegicus (Rat).